Here is a 199-residue protein sequence, read N- to C-terminus: N-(5'-phosphoribosyl)anthranilate isomerase (199 aa).

Belongs to the TrpF family.

It carries out the reaction N-(5-phospho-beta-D-ribosyl)anthranilate = 1-(2-carboxyphenylamino)-1-deoxy-D-ribulose 5-phosphate. Its pathway is amino-acid biosynthesis; L-tryptophan biosynthesis; L-tryptophan from chorismate: step 3/5. This is N-(5'-phosphoribosyl)anthranilate isomerase from Streptococcus pneumoniae (strain ATCC 700669 / Spain 23F-1).